A 99-amino-acid polypeptide reads, in one-letter code: Photosystem II reaction center Psb28 protein (99 aa).

The protein belongs to the Psb28 family. In terms of assembly, part of the photosystem II complex.

It localises to the cell inner membrane. This is Photosystem II reaction center Psb28 protein from Gloeobacter violaceus (strain ATCC 29082 / PCC 7421).